Reading from the N-terminus, the 138-residue chain is Phosphoribosyl-AMP cyclohydrolase (138 aa).

Residues 1–23 (MSEQSAPSPTPAAELSSDPASPL) form a disordered region. Asp100 provides a ligand contact to Mg(2+). Cys101 is a Zn(2+) binding site. Positions 102 and 104 each coordinate Mg(2+). 2 residues coordinate Zn(2+): Cys117 and Cys124.

Belongs to the PRA-CH family. Homodimer. The cofactor is Mg(2+). Zn(2+) serves as cofactor.

The protein localises to the cytoplasm. It carries out the reaction 1-(5-phospho-beta-D-ribosyl)-5'-AMP + H2O = 1-(5-phospho-beta-D-ribosyl)-5-[(5-phospho-beta-D-ribosylamino)methylideneamino]imidazole-4-carboxamide. The protein operates within amino-acid biosynthesis; L-histidine biosynthesis; L-histidine from 5-phospho-alpha-D-ribose 1-diphosphate: step 3/9. Its function is as follows. Catalyzes the hydrolysis of the adenine ring of phosphoribosyl-AMP. The sequence is that of Phosphoribosyl-AMP cyclohydrolase from Paenarthrobacter aurescens (strain TC1).